Consider the following 130-residue polypeptide: Phosphoribosyl-AMP cyclohydrolase (130 aa).

Asp77 is a binding site for Mg(2+). Cys78 is a Zn(2+) binding site. The Mg(2+) site is built by Asp79 and Asp81. Zn(2+)-binding residues include Cys95 and Cys102.

It belongs to the PRA-CH family. Homodimer. Mg(2+) serves as cofactor. It depends on Zn(2+) as a cofactor.

The protein localises to the cytoplasm. The enzyme catalyses 1-(5-phospho-beta-D-ribosyl)-5'-AMP + H2O = 1-(5-phospho-beta-D-ribosyl)-5-[(5-phospho-beta-D-ribosylamino)methylideneamino]imidazole-4-carboxamide. Its pathway is amino-acid biosynthesis; L-histidine biosynthesis; L-histidine from 5-phospho-alpha-D-ribose 1-diphosphate: step 3/9. Functionally, catalyzes the hydrolysis of the adenine ring of phosphoribosyl-AMP. This Pseudomonas syringae pv. syringae (strain B728a) protein is Phosphoribosyl-AMP cyclohydrolase.